Consider the following 256-residue polypeptide: H-2 class II histocompatibility antigen, A-B alpha chain (256 aa).

A signal peptide spans 1-23; it reads MPRSRALILGVLALTTMLSLCGG. The segment at 24 to 111 is alpha-1; that stretch reads EDDIEADHVG…KRSNSTPATN (88 aa). Over 24-218 the chain is Extracellular; it reads EDDIEADHVG…IPAPMSELTE (195 aa). The interval 112–205 is alpha-2; that stretch reads EAPQATVFPK…GLEEPVLKHW (94 aa). The Ig-like C1-type domain occupies 114–206; it reads PQATVFPKSP…LEEPVLKHWE (93 aa). Cysteine 134 and cysteine 190 are disulfide-bonded. Asparagine 145 carries an N-linked (GlcNAc...) asparagine glycan. The connecting peptide stretch occupies residues 206-218; sequence EPEIPAPMSELTE. Residues 219–244 traverse the membrane as a helical segment; sequence TVVCALGLSVGLVGIVVGTIFIIQGL. The Cytoplasmic portion of the chain corresponds to 245-256; it reads RSGGTSRHPGPL.

It belongs to the MHC class II family.

Its subcellular location is the membrane. The chain is H-2 class II histocompatibility antigen, A-B alpha chain (H2-Aa) from Mus musculus (Mouse).